We begin with the raw amino-acid sequence, 525 residues long: Estrogen receptor (525 aa).

The disordered stretch occupies residues 1–59 (PTSPLVFVPSSPRLSPFMHPPSHHYLETTSTPVYRSSVSSSQQQLSREDQCGTSDDSYS). Positions 1–82 (PTSPLVFVPS…GFEMAKEMRF (82 aa)) are modulating. Over residues 36–45 (SSVSSSQQQL) the composition is skewed to low complexity. 2 NR C4-type zinc fingers span residues 83–103 (CAVC…CEGC) and 119–143 (CPAT…LRKC). The segment at residues 83 to 148 (CAVCSDYASG…RLRKCYQVGM (66 aa)) is a DNA-binding region (nuclear receptor). Residues 149–209 (MKGGVRKDRG…GGGKSSIIGM (61 aa)) are hinge. Residues 154 to 182 (RKDRGRVLRRDKRRTGTSDKASKDLEHRT) are compositionally biased toward basic and acidic residues. Residues 154-203 (RKDRGRVLRRDKRRTGTSDKASKDLEHRTAPPQDRRKHSSSSSSAGGGGK) form a disordered region. An NR LBD domain is found at 210–446 (SPDQVLLLLQ…DLLLEMLDAH (237 aa)). Basic and acidic residues predominate over residues 452–465 (DRPAESWSQADREP). The disordered stretch occupies residues 452-525 (DRPAESWSQA…GPRSDCTHIL (74 aa)). Positions 479 to 493 (SGGGDGGPSSAGSGS) are enriched in gly residues.

It belongs to the nuclear hormone receptor family. NR3 subfamily. Binds DNA as a homodimer. Can form a heterodimer with ER-beta. Abundant in the liver, less abundant in the testes and barely detectable in the ovary and brain.

It is found in the nucleus. Its function is as follows. The steroid hormones and their receptors are involved in the regulation of eukaryotic gene expression and affect cellular proliferation and differentiation in target tissues. In Micropogonias undulatus (Atlantic croaker), this protein is Estrogen receptor (esr1).